We begin with the raw amino-acid sequence, 119 residues long: Large ribosomal subunit protein bL20 (119 aa).

Belongs to the bacterial ribosomal protein bL20 family.

Its function is as follows. Binds directly to 23S ribosomal RNA and is necessary for the in vitro assembly process of the 50S ribosomal subunit. It is not involved in the protein synthesizing functions of that subunit. This is Large ribosomal subunit protein bL20 from Rhodospirillum centenum (strain ATCC 51521 / SW).